The following is a 630-amino-acid chain: 1-deoxy-D-xylulose-5-phosphate synthase (630 aa).

Thiamine diphosphate is bound by residues H72 and 113 to 115 (GHS). Residue D144 participates in Mg(2+) binding. Thiamine diphosphate contacts are provided by residues 145–146 (GA), N173, Y284, and E367. Mg(2+) is bound at residue N173.

Belongs to the transketolase family. DXPS subfamily. In terms of assembly, homodimer. Mg(2+) serves as cofactor. The cofactor is thiamine diphosphate.

It catalyses the reaction D-glyceraldehyde 3-phosphate + pyruvate + H(+) = 1-deoxy-D-xylulose 5-phosphate + CO2. Its pathway is metabolic intermediate biosynthesis; 1-deoxy-D-xylulose 5-phosphate biosynthesis; 1-deoxy-D-xylulose 5-phosphate from D-glyceraldehyde 3-phosphate and pyruvate: step 1/1. Its function is as follows. Catalyzes the acyloin condensation reaction between C atoms 2 and 3 of pyruvate and glyceraldehyde 3-phosphate to yield 1-deoxy-D-xylulose-5-phosphate (DXP). This is 1-deoxy-D-xylulose-5-phosphate synthase from Bacillus cereus (strain B4264).